Here is a 61-residue protein sequence, read N- to C-terminus: [Thr6]-bradykinyl-Val,Asp (61 aa).

Positions 1-22 (MSFLKKSLFLVLFLGLVSFSIC) are cleaved as a signal peptide. A propeptide spanning residues 23–50 (EEEKRETEEEENEDEMDKESEEKRESPE) is cleaved from the precursor. A disordered region spans residues 24–61 (EEKRETEEEENEDEMDKESEEKRESPERPPGFTPFRVD). Over residues 30 to 41 (EEEENEDEMDKE) the composition is skewed to acidic residues. The residue at position 53 (Pro-53) is a 4-hydroxyproline; in form [Hyp3,Thr6]-bradykinyl-Val,Asp and [Hyp3,Thr6]-bradykinin.

It belongs to the frog skin active peptide (FSAP) family. Bradykinin-related peptide subfamily. In terms of tissue distribution, expressed by the skin glands.

It localises to the secreted. Functionally, induces relaxation of rat smooth muscle from tail artery (EC(50)=16.8 nM) and contraction of that from ileum (EC(50)=205 nM), urinary bladder (EC(50)=895 nM) and uterus (EC(50)=60.3 nM). Binds to both bradykinin receptor B1 (BDKRB1) and B2 (BDKRB2). In terms of biological role, [Hyp3,Thr6]-bradykinin: Induces relaxation of rat smooth muscle from tail artery (EC(50)=56.7 nM) and contraction of that from ileum (EC(50)=588 nM), urinary bladder (EC(50)=4.6 uM) and uterus (EC(50)=3.9 nM). Binds to both bradykinin receptor B1 (BDKRB1) and B2 (BDKRB2). In arterial smooth muscle, the effect via BDKRB1 is stronger, in uterus, ileum and urinary bladder that via BDKRB2. Induces relaxation of rat smooth muscle from tail artery (EC(50)=10.8 nM) and contraction of that from ileum (EC(50)=645 nM), urinary bladder (EC(50)=1.1 uM) and uterus (EC(50)=1.2 uM). Binds to both bradykinin receptor B1 (BDKRB1) and B2 (BDKRB2). Apart from uterus smooth muscle, the effect via B2 is stronger. Its function is as follows. [Hyp3,Thr6]-bradykinyl-Val,Asp: Induces relaxation of rat smooth muscle from tail artery (EC(50)=3.5 nM) and contraction of that from ileum (EC(50)=223 nM), urinary bladder (EC(50)=1.5 uM) and uterus (EC(50)=356 nM). Binds to both bradykinin receptor B1 (BDKRB1) and B2 (BDKRB2); the effects via B2 a stronger. In Agalychnis callidryas (Red-eyed tree frog), this protein is [Thr6]-bradykinyl-Val,Asp.